We begin with the raw amino-acid sequence, 304 residues long: MPEQALLEEVVDKVRPLLGQGKVANYIPALANVDAGKLGIAVTTIDGETIGAGDYLEPFSIQSISKVFSLTLALTLYEETEIWSRVGKEPSGHSFNSLVQVELERGKPRNPFINAGALVIADLLQSRLGAPKHRMLELVRALSQNDKVCFDKQVADSEYQHSARNAAIAYLMKSFGNFQGDVDTVLRTYFHYCALKMNCADLSRAMLYLANRGKTLDGTELISQVQTRQLNALLATSGLYDGAGEFAYRVGMPGKSGVGGGIIAVIPGELSVCVWSPELDNQGNSLAGTAMLEHLSQRLGRSIF.

Residues Ser63, Asn114, Glu158, Asn165, Tyr189, Tyr240, and Val258 each contribute to the substrate site.

Belongs to the glutaminase family. In terms of assembly, homotetramer.

The catalysed reaction is L-glutamine + H2O = L-glutamate + NH4(+). The chain is Glutaminase from Shewanella sp. (strain ANA-3).